A 264-amino-acid polypeptide reads, in one-letter code: Thymidylate synthase (264 aa).

Arg21 provides a ligand contact to dUMP. His51 is a binding site for (6R)-5,10-methylene-5,6,7,8-tetrahydrofolate. Residue 126–127 coordinates dUMP; that stretch reads RR. The active-site Nucleophile is Cys146. DUMP is bound by residues 166 to 169, Asn177, and 207 to 209; these read RSCD and HLY. Asp169 contacts (6R)-5,10-methylene-5,6,7,8-tetrahydrofolate. Ala263 provides a ligand contact to (6R)-5,10-methylene-5,6,7,8-tetrahydrofolate.

The protein belongs to the thymidylate synthase family. Bacterial-type ThyA subfamily. Homodimer.

It is found in the cytoplasm. It catalyses the reaction dUMP + (6R)-5,10-methylene-5,6,7,8-tetrahydrofolate = 7,8-dihydrofolate + dTMP. It functions in the pathway pyrimidine metabolism; dTTP biosynthesis. Catalyzes the reductive methylation of 2'-deoxyuridine-5'-monophosphate (dUMP) to 2'-deoxythymidine-5'-monophosphate (dTMP) while utilizing 5,10-methylenetetrahydrofolate (mTHF) as the methyl donor and reductant in the reaction, yielding dihydrofolate (DHF) as a by-product. This enzymatic reaction provides an intracellular de novo source of dTMP, an essential precursor for DNA biosynthesis. The chain is Thymidylate synthase from Aeromonas hydrophila subsp. hydrophila (strain ATCC 7966 / DSM 30187 / BCRC 13018 / CCUG 14551 / JCM 1027 / KCTC 2358 / NCIMB 9240 / NCTC 8049).